A 163-amino-acid chain; its full sequence is uncharacterized protein (163 aa).

This sequence belongs to the IMPDH/GMPR family.

This is an uncharacterized protein from Haemophilus influenzae (strain ATCC 51907 / DSM 11121 / KW20 / Rd).